Here is a 319-residue protein sequence, read N- to C-terminus: tRNA-modifying protein YgfZ (319 aa).

Residues Trp27 and Trp189 each coordinate folate.

It belongs to the tRNA-modifying YgfZ family.

The protein resides in the cytoplasm. In terms of biological role, folate-binding protein involved in regulating the level of ATP-DnaA and in the modification of some tRNAs. It is probably a key factor in regulatory networks that act via tRNA modification, such as initiation of chromosomal replication. The chain is tRNA-modifying protein YgfZ from Buchnera aphidicola subsp. Acyrthosiphon pisum (strain APS) (Acyrthosiphon pisum symbiotic bacterium).